We begin with the raw amino-acid sequence, 400 residues long: LIM/homeobox protein Lhx3 (400 aa).

LIM zinc-binding domains lie at 34–84 (CAGC…CKDD) and 93–147 (CAAC…CKAD). At serine 74 the chain carries Phosphoserine. Positions 160 to 219 (AKRPRTTITAKQLETLKSAYNTSPKPARHVREQLSSETGLDMRVVQVWFQNRRAKEKRLK) form a DNA-binding region, homeobox. 2 disordered regions span residues 215–280 (EKRL…SSLG) and 297–400 (TLDH…HAQF). Tyrosine 230 carries the post-translational modification Phosphotyrosine. Residues serine 237 and serine 241 each carry the phosphoserine modification. Pro residues-rich tracts occupy residues 319 to 334 (GIPPSPAAPQSLPGPQ) and 352 to 361 (SGPPGGPPPM). Residues 368–380 (GPSSDLSTESSSG) are compositionally biased toward polar residues.

Interacts with POU1F1. At neuronal promoters, interacts with LDB1, in motor neurons LDB1 is displaced by ISL1 and a ternary complex is formed in which ISL1 contacts both LHX3 and LDB1; allosteric structural changes in the DNA binding domain of LHX3, induced by the ISL1-LHX3 interaction, may explain differences in sequence specificity of the different complexes. Interacts with LDB2. May interact with CITED2/MRG1. As to expression, mostly expressed in the pituitary anterior and intermediate lobes. It is also expressed in the pineal gland and transiently in the primordia of motor neurons including the spinal cord, pons and medulla oblongata.

The protein localises to the nucleus. Transcription factor. Recognizes and binds to the consensus sequence motif 5'-AATTAATTA-3' in the regulatory elements of target genes, such as glycoprotein hormones alpha chain CGA and visual system homeobox CHX10, positively modulating transcription; transcription can be co-activated by LDB2. Synergistically enhances transcription from the prolactin promoter in cooperation with POU1F1/Pit-1. Required for the establishment of the specialized cells of the pituitary gland and the nervous system. Involved in the development of interneurons and motor neurons in cooperation with LDB1 and ISL1. In Mus musculus (Mouse), this protein is LIM/homeobox protein Lhx3 (Lhx3).